Consider the following 131-residue polypeptide: Small ribosomal subunit protein uS8 (131 aa).

The protein belongs to the universal ribosomal protein uS8 family. As to quaternary structure, part of the 30S ribosomal subunit. Contacts proteins S5 and S12.

In terms of biological role, one of the primary rRNA binding proteins, it binds directly to 16S rRNA central domain where it helps coordinate assembly of the platform of the 30S subunit. The protein is Small ribosomal subunit protein uS8 of Halorhodospira halophila (strain DSM 244 / SL1) (Ectothiorhodospira halophila (strain DSM 244 / SL1)).